A 371-amino-acid polypeptide reads, in one-letter code: Dihydroorotate dehydrogenase (quinone) (371 aa).

Residues 79–83 (AGFDK) and Thr-103 each bind FMN. Lys-83 contributes to the substrate binding site. 128-132 (NRMGF) contacts substrate. The FMN site is built by Asn-156 and Asn-189. Position 189 (Asn-189) interacts with substrate. The active-site Nucleophile is Ser-192. Asn-194 contacts substrate. Positions 225 and 253 each coordinate FMN. Residue 254-255 (NT) participates in substrate binding. FMN is bound by residues Gly-279, Gly-308, and 329–330 (YT).

The protein belongs to the dihydroorotate dehydrogenase family. Type 2 subfamily. As to quaternary structure, monomer. FMN is required as a cofactor.

It localises to the cell membrane. It carries out the reaction (S)-dihydroorotate + a quinone = orotate + a quinol. The protein operates within pyrimidine metabolism; UMP biosynthesis via de novo pathway; orotate from (S)-dihydroorotate (quinone route): step 1/1. Its function is as follows. Catalyzes the conversion of dihydroorotate to orotate with quinone as electron acceptor. The protein is Dihydroorotate dehydrogenase (quinone) of Corynebacterium glutamicum (strain ATCC 13032 / DSM 20300 / JCM 1318 / BCRC 11384 / CCUG 27702 / LMG 3730 / NBRC 12168 / NCIMB 10025 / NRRL B-2784 / 534).